Consider the following 49-residue polypeptide: Defensin Tm-AMP-D1.2 (49 aa).

4 disulfide bridges follow: cysteine 3–cysteine 49, cysteine 14–cysteine 34, cysteine 20–cysteine 43, and cysteine 24–cysteine 45.

In terms of biological role, plant defense peptide. The sequence is that of Defensin Tm-AMP-D1.2 from Triticum monococcum (Einkorn wheat).